A 30-amino-acid chain; its full sequence is NADH-ubiquinone oxidoreductase chain 5 (30 aa).

Residues 7–27 (NIIIIINSSLIIILFSSIFFF) traverse the membrane as a helical segment.

This sequence belongs to the complex I subunit 5 family.

It is found in the mitochondrion inner membrane. It catalyses the reaction a ubiquinone + NADH + 5 H(+)(in) = a ubiquinol + NAD(+) + 4 H(+)(out). Core subunit of the mitochondrial membrane respiratory chain NADH dehydrogenase (Complex I) that is believed to belong to the minimal assembly required for catalysis. Complex I functions in the transfer of electrons from NADH to the respiratory chain. The immediate electron acceptor for the enzyme is believed to be ubiquinone. This chain is NADH-ubiquinone oxidoreductase chain 5 (ND5), found in Pisaster ochraceus (Ochre sea star).